The chain runs to 522 residues: Serine/threonine-protein kinase BSK1-2 (522 aa).

The disordered stretch occupies residues 1-54; sequence MGCCGSSLRVGSHAPEKPPRRARPPPPPPQPHHPRRPSFTLNAHQAAASSSAAS. A lipid anchor (N-myristoyl glycine) is attached at G2. The region spanning 79 to 338 is the Protein kinase domain; the sequence is ANIVSESGEK…KLVSILQPLQ (260 aa). Residues 85-93 and K111 contribute to the ATP site; that span reads SGEKAPNLV. The active-site Proton acceptor is D205.

This sequence belongs to the protein kinase superfamily. Ser/Thr protein kinase family.

Its subcellular location is the cell membrane. It carries out the reaction L-seryl-[protein] + ATP = O-phospho-L-seryl-[protein] + ADP + H(+). It catalyses the reaction L-threonyl-[protein] + ATP = O-phospho-L-threonyl-[protein] + ADP + H(+). Probable serine/threonine kinase that functions as a positive regulator of plant immunity. May be involved in the regulation of pattern-triggered immunity (PTI). Does not seem to be involved in responses to brassinosteroid (BR) signaling. In Oryza sativa subsp. japonica (Rice), this protein is Serine/threonine-protein kinase BSK1-2.